The following is a 180-amino-acid chain: Bifunctional protein PyrR (180 aa).

The PRPP-binding motif lies at Val-101 to Thr-113.

This sequence belongs to the purine/pyrimidine phosphoribosyltransferase family. PyrR subfamily. In terms of assembly, homodimer and homohexamer; in equilibrium.

The enzyme catalyses UMP + diphosphate = 5-phospho-alpha-D-ribose 1-diphosphate + uracil. Regulates transcriptional attenuation of the pyrimidine nucleotide (pyr) operon by binding in a uridine-dependent manner to specific sites on pyr mRNA. This disrupts an antiterminator hairpin in the RNA and favors formation of a downstream transcription terminator, leading to a reduced expression of downstream genes. Functionally, also displays a weak uracil phosphoribosyltransferase activity which is not physiologically significant. In Bacillus cereus (strain ATCC 14579 / DSM 31 / CCUG 7414 / JCM 2152 / NBRC 15305 / NCIMB 9373 / NCTC 2599 / NRRL B-3711), this protein is Bifunctional protein PyrR.